Consider the following 120-residue polypeptide: Small ribosomal subunit protein uS19 (120 aa).

The protein belongs to the universal ribosomal protein uS19 family.

The chain is Small ribosomal subunit protein uS19 (RPS15) from Naegleria gruberi (Amoeba).